The sequence spans 156 residues: 6,7-dimethyl-8-ribityllumazine synthase (156 aa).

Residues Phe22, 57 to 59, and 81 to 83 each bind 5-amino-6-(D-ribitylamino)uracil; these read AYE and TVI. Position 86–87 (86–87) interacts with (2S)-2-hydroxy-3-oxobutyl phosphate; that stretch reads GT. The active-site Proton donor is the His89. Residue Phe114 participates in 5-amino-6-(D-ribitylamino)uracil binding. Position 128 (Arg128) interacts with (2S)-2-hydroxy-3-oxobutyl phosphate.

It belongs to the DMRL synthase family. As to quaternary structure, forms an icosahedral capsid composed of 60 subunits, arranged as a dodecamer of pentamers.

The catalysed reaction is (2S)-2-hydroxy-3-oxobutyl phosphate + 5-amino-6-(D-ribitylamino)uracil = 6,7-dimethyl-8-(1-D-ribityl)lumazine + phosphate + 2 H2O + H(+). The protein operates within cofactor biosynthesis; riboflavin biosynthesis; riboflavin from 2-hydroxy-3-oxobutyl phosphate and 5-amino-6-(D-ribitylamino)uracil: step 1/2. In terms of biological role, catalyzes the formation of 6,7-dimethyl-8-ribityllumazine by condensation of 5-amino-6-(D-ribitylamino)uracil with 3,4-dihydroxy-2-butanone 4-phosphate. This is the penultimate step in the biosynthesis of riboflavin. This Sodalis glossinidius (strain morsitans) protein is 6,7-dimethyl-8-ribityllumazine synthase.